The chain runs to 505 residues: Glutamyl-tRNA(Gln) amidotransferase subunit B, mitochondrial (505 aa).

This sequence belongs to the GatB/GatE family. GatB subfamily. As to quaternary structure, subunit of the heterotrimeric GatCAB amidotransferase (AdT) complex, composed of A, B and C subunits.

The protein resides in the mitochondrion. The enzyme catalyses L-glutamyl-tRNA(Gln) + L-glutamine + ATP + H2O = L-glutaminyl-tRNA(Gln) + L-glutamate + ADP + phosphate + H(+). In terms of biological role, allows the formation of correctly charged Gln-tRNA(Gln) through the transamidation of misacylated Glu-tRNA(Gln) in the mitochondria. The reaction takes place in the presence of glutamine and ATP through an activated gamma-phospho-Glu-tRNA(Gln). The chain is Glutamyl-tRNA(Gln) amidotransferase subunit B, mitochondrial from Schizosaccharomyces japonicus (strain yFS275 / FY16936) (Fission yeast).